A 228-amino-acid polypeptide reads, in one-letter code: UPF0758 protein MW1604 (228 aa).

One can recognise an MPN domain in the interval 102 to 224 (KITQPSDVAD…FTSLVEAGYF (123 aa)). Histidine 173, histidine 175, and aspartate 186 together coordinate Zn(2+). The short motif at 173 to 186 (HNHPSGDVTPSQED) is the JAMM motif element.

Belongs to the UPF0758 family.

The chain is UPF0758 protein MW1604 from Staphylococcus aureus (strain MW2).